The following is a 146-amino-acid chain: Large ribosomal subunit protein uL15 (146 aa).

Positions 1-42 (MTIKLHDLQPARGSKTTRTRVGRGEASKGKTAGRGTKGTKAR) are disordered.

This sequence belongs to the universal ribosomal protein uL15 family. As to quaternary structure, part of the 50S ribosomal subunit.

Functionally, binds to the 23S rRNA. The protein is Large ribosomal subunit protein uL15 of Mycobacterium leprae (strain Br4923).